Here is a 497-residue protein sequence, read N- to C-terminus: 4,4'-diaponeurosporene oxygenase (497 aa).

7 to 19 (VIGGGLGGISAAI) provides a ligand contact to FAD.

This sequence belongs to the carotenoid/retinoid oxidoreductase family. CrtP subfamily. It depends on FAD as a cofactor.

The enzyme catalyses all-trans-4,4'-diaponeurosporene + 2 AH2 + 2 O2 = 4,4'-diaponeurosporenal + 2 A + 3 H2O. It participates in carotenoid biosynthesis; staphyloxanthin biosynthesis; staphyloxanthin from farnesyl diphosphate: step 3/5. Functionally, involved in the biosynthesis of the yellow-orange carotenoid staphyloxanthin, which plays a role in the virulence via its protective function against oxidative stress. Catalyzes the oxidation of the terminal methyl side group of 4,4'-diaponeurosporene to form 4,4'-diaponeurosporen-4-al. The C40 carotenoid lycopene is a poor substrate. The sequence is that of 4,4'-diaponeurosporene oxygenase from Staphylococcus aureus (strain Mu50 / ATCC 700699).